Reading from the N-terminus, the 2248-residue chain is Putative Polycomb group protein ASXL3 (2248 aa).

Residues 10 to 84 (RTWAEAARLA…KSGLYALKKE (75 aa)) form the HTH HARE-type domain. A disordered region spans residues 156–232 (ALKQALRQQQ…GKQTSQHLKR (77 aa)). Residues 203–216 (KNGEADSSDKEMKH) show a composition bias toward basic and acidic residues. The segment covering 219 to 228 (KSPTGKQTSQ) has biased composition (polar residues). In terms of domain architecture, DEUBAD spans 254-363 (PGSILVNTNL…FERFYGEKLG (110 aa)). Disordered regions lie at residues 368–414 (ESVK…PASP), 547–583 (TSSM…EGQF), 607–643 (CISE…CTPA), 703–726 (EASP…PLTS), 762–853 (ERMA…ASIP), 869–1052 (LQRT…TGAR), 1123–1152 (TSKE…ETKM), 1183–1203 (QQSL…VHSS), 1431–1462 (KLSA…GFAP), 1573–1596 (TAPS…ADTT), and 1990–2068 (LSPN…KRLS). Composition is skewed to polar residues over residues 371 to 389 (KLTT…SCGT), 395 to 407 (SAQT…QPKS), 564 to 580 (AVET…SSLE), 607 to 617 (CISETSFSSES), and 624 to 643 (SLPS…CTPA). Residues 796–818 (NLTSQQKNLSNTPEPIIMSSSSI) show a composition bias toward polar residues. Low complexity predominate over residues 937–949 (SHTSKSSEPSKSP). 3 stretches are compositionally biased toward basic and acidic residues: residues 950 to 968 (DGIR…KTAE), 975 to 987 (CKEK…DDQS), and 997 to 1008 (PEKEQPPREEPR). Residues 1036-1046 (RASTSTSVSGG) show a composition bias toward polar residues. Over residues 2016-2046 (HPPPPPPPPPPPPLALPPPPPPPPPLPPPLP) the composition is skewed to pro residues. The PHD-type; atypical zinc finger occupies 2210–2247 (ELKCSCRLKAMIVCKGCGAFCHDDCIGPSKLCVACLVV).

Belongs to the Asx family. In terms of assembly, core component of the polycomb repressive deubiquitinase (PR-DUB) complex, at least composed of BAP1, one of ASXL1, ASXL2 or (probably) ASXL3, and one of MBD5 or MBD6. Distinct combinations of ASXL and MBD proteins may preferentially bind specific histone modification marks. The PR-DUB core associates with a number of accessory proteins, including FOXK1, FOXK2, KDM1B, HCFC1 and OGT; KDM1B specifically associates with ASXL2 PR-DUB complexes. Interacts (via PHD domain) with MBD5 and MBD6 (via MBD domain); the interaction is probably direct and mediates association of MBD proteins with the PR-DUB core. Expressed in pancreatic islets, testis, neuroblastoma, head and neck tumor.

The protein localises to the nucleus. Its function is as follows. Putative Polycomb group (PcG) protein. PcG proteins act by forming multiprotein complexes, which are required to maintain the transcriptionally repressive state of homeotic genes throughout development. PcG proteins are not required to initiate repression, but to maintain it during later stages of development. They probably act via methylation of histones, rendering chromatin heritably changed in its expressibility. Non-catalytic component of the PR-DUB complex, a complex that specifically mediates deubiquitination of histone H2A monoubiquitinated at 'Lys-119' (H2AK119ub1). The PR-DUB complex is an epigenetic regulator of gene expression and acts as a transcriptional coactivator, affecting genes involved in development, cell communication, signaling, cell proliferation and cell viability. ASXL1, ASXL2 and ASXL3 function redundantly in the PR-DUB complex and are essential for chromatin recruitment and transcriptional activation of associated genes. The sequence is that of Putative Polycomb group protein ASXL3 (ASXL3) from Homo sapiens (Human).